Here is a 62-residue protein sequence, read N- to C-terminus: MYKFEIYQDKAGEYRFRFKASNGETMFSSEGYKAKASAIHAIESIKRNSAGADTVDLTTMTA.

Belongs to the UPF0339 family.

The protein is UPF0339 protein Atu0232 of Agrobacterium fabrum (strain C58 / ATCC 33970) (Agrobacterium tumefaciens (strain C58)).